A 180-amino-acid chain; its full sequence is NAD(P)H-quinone oxidoreductase subunit I, chloroplastic (180 aa).

2 4Fe-4S ferredoxin-type domains span residues 55-84 (GRIH…VDWR) and 95-124 (LNYS…MTEE). Positions 64, 67, 70, 74, 104, 107, 110, and 114 each coordinate [4Fe-4S] cluster.

It belongs to the complex I 23 kDa subunit family. As to quaternary structure, NDH is composed of at least 16 different subunits, 5 of which are encoded in the nucleus. The cofactor is [4Fe-4S] cluster.

It is found in the plastid. Its subcellular location is the chloroplast thylakoid membrane. It carries out the reaction a plastoquinone + NADH + (n+1) H(+)(in) = a plastoquinol + NAD(+) + n H(+)(out). It catalyses the reaction a plastoquinone + NADPH + (n+1) H(+)(in) = a plastoquinol + NADP(+) + n H(+)(out). NDH shuttles electrons from NAD(P)H:plastoquinone, via FMN and iron-sulfur (Fe-S) centers, to quinones in the photosynthetic chain and possibly in a chloroplast respiratory chain. The immediate electron acceptor for the enzyme in this species is believed to be plastoquinone. Couples the redox reaction to proton translocation, and thus conserves the redox energy in a proton gradient. The polypeptide is NAD(P)H-quinone oxidoreductase subunit I, chloroplastic (Zea mays (Maize)).